A 262-amino-acid polypeptide reads, in one-letter code: Zinc finger protein ehn-3 (262 aa).

C2H2-type zinc fingers lie at residues 2–24, 30–52, 59–84, and 92–115; these read EKCD…KVMH, FECQ…MMTH, FECP…DSEH, and AKCK…HTAH. Residues 179-204 form a disordered region; it reads SVKSAKELSPTPSTEIETPEEEELDG. Positions 185 to 194 are enriched in low complexity; the sequence is ELSPTPSTEI. Residues 195-204 are compositionally biased toward acidic residues; it reads ETPEEEELDG. 2 consecutive C2H2-type zinc fingers follow at residues 208 to 230 and 236 to 260; these read WYCD…SGLH and FKCS…YANH.

The protein belongs to the krueppel C2H2-type zinc-finger protein family.

The protein localises to the nucleus. Its function is as follows. Together with the zinc finger protein ztf-16, plays a role in gonadogenesis, specifically in somatic gonad precursor cell development. This is possibly by regulating tra-1 gene expression. Functionally, required for proper gonadal primordium assembly and somatic gonad precursor cell morphology. The protein is Zinc finger protein ehn-3 of Caenorhabditis elegans.